The sequence spans 72 residues: UPF0150 protein ssl0738 (72 aa).

The protein belongs to the UPF0150 family.

This Synechocystis sp. (strain ATCC 27184 / PCC 6803 / Kazusa) protein is UPF0150 protein ssl0738.